Consider the following 377-residue polypeptide: Actin-related protein 2/3 complex subunit 1 (377 aa).

WD repeat units follow at residues 9 to 48 (ILPK…WKHA), 53 to 92 (DHDK…TWKQ), 98 to 139 (RLNR…WVSK), 144 to 183 (PLRS…VDAK), and 203 to 242 (PSGG…QPPR). Residues 293-313 (GTSKTSFTHTGNTGEGREEEG) are disordered. The stretch at 342–376 (VHQNMIATLRPYAGTPGNITAFTSSGTDGRVVLWT) is one WD 6 repeat.

Belongs to the WD repeat ARPC1 family. Component of the Arp2/3 complex composed of arp2, act2, arc1/p41-ARC, arc2/p34-ARC, arc3/p21-ARC, arc4/p20-ARC and arc5/p16-ARC.

It localises to the cytoplasm. It is found in the cytoskeleton. The protein localises to the actin patch. Its function is as follows. Functions as a component of the Arp2/3 complex which is involved in regulation of actin polymerization and together with an activating nucleation-promoting factor (NPF) mediates the formation of branched actin networks. The protein is Actin-related protein 2/3 complex subunit 1 (arc1) of Schizosaccharomyces pombe (strain 972 / ATCC 24843) (Fission yeast).